We begin with the raw amino-acid sequence, 285 residues long: Polyamine aminopropyltransferase (285 aa).

The 237-residue stretch at 5-241 folds into the PABS domain; sequence DNWYIEHFQP…GWWSVTMASK (237 aa). Residue Gln35 coordinates S-methyl-5'-thioadenosine. The spermidine site is built by His66 and Asp90. S-methyl-5'-thioadenosine-binding positions include Asp110 and 141–142; that span reads DG. The Proton acceptor role is filled by Asp160. Residue 160-163 participates in spermidine binding; the sequence is DSTD. Position 167 (Pro167) interacts with S-methyl-5'-thioadenosine.

It belongs to the spermidine/spermine synthase family. In terms of assembly, homodimer or homotetramer.

The protein localises to the cytoplasm. It carries out the reaction S-adenosyl 3-(methylsulfanyl)propylamine + putrescine = S-methyl-5'-thioadenosine + spermidine + H(+). The protein operates within amine and polyamine biosynthesis; spermidine biosynthesis; spermidine from putrescine: step 1/1. Catalyzes the irreversible transfer of a propylamine group from the amino donor S-adenosylmethioninamine (decarboxy-AdoMet) to putrescine (1,4-diaminobutane) to yield spermidine. The protein is Polyamine aminopropyltransferase of Xanthomonas oryzae pv. oryzae (strain MAFF 311018).